The following is a 508-amino-acid chain: GMP synthase [glutamine-hydrolyzing] (508 aa).

Residues 1-189 form the Glutamine amidotransferase type-1 domain; that stretch reads MILVLDFGSQ…ALLVCGCEKT (189 aa). Catalysis depends on cysteine 78, which acts as the Nucleophile. Catalysis depends on residues histidine 163 and glutamate 165. The GMPS ATP-PPase domain occupies 190-383; that stretch reads WGMQHFAQRE…LGVSQDFLMH (194 aa). Position 217–223 (217–223) interacts with ATP; the sequence is SGGVDST.

Homodimer.

It carries out the reaction XMP + L-glutamine + ATP + H2O = GMP + L-glutamate + AMP + diphosphate + 2 H(+). It functions in the pathway purine metabolism; GMP biosynthesis; GMP from XMP (L-Gln route): step 1/1. In terms of biological role, catalyzes the synthesis of GMP from XMP. In Helicobacter pylori (strain G27), this protein is GMP synthase [glutamine-hydrolyzing].